Here is a 469-residue protein sequence, read N- to C-terminus: 3-isopropylmalate dehydratase large subunit (469 aa).

[4Fe-4S] cluster is bound by residues C349, C410, and C413.

The protein belongs to the aconitase/IPM isomerase family. LeuC type 1 subfamily. Heterodimer of LeuC and LeuD. The cofactor is [4Fe-4S] cluster.

The catalysed reaction is (2R,3S)-3-isopropylmalate = (2S)-2-isopropylmalate. It participates in amino-acid biosynthesis; L-leucine biosynthesis; L-leucine from 3-methyl-2-oxobutanoate: step 2/4. In terms of biological role, catalyzes the isomerization between 2-isopropylmalate and 3-isopropylmalate, via the formation of 2-isopropylmaleate. The chain is 3-isopropylmalate dehydratase large subunit from Aromatoleum aromaticum (strain DSM 19018 / LMG 30748 / EbN1) (Azoarcus sp. (strain EbN1)).